The primary structure comprises 280 residues: uncharacterized protein (280 aa).

This is an uncharacterized protein from Acanthamoeba polyphaga (Amoeba).